The chain runs to 273 residues: Anthranilate synthase beta subunit 2, chloroplastic (273 aa).

The N-terminal 47 residues, 1–47 (MATAARLLPKIQSPASPAVAEARRRRPSSLRLGVTSGPARTLKQKLV), are a transit peptide targeting the chloroplast. The interval 15-35 (ASPAVAEARRRRPSSLRLGVT) is disordered. One can recognise a Glutamine amidotransferase type-1 domain in the interval 70 to 269 (PIIVIDNYDS…IKIIEGYEAL (200 aa)). Residue 121–123 (GPG) coordinates L-glutamine. The active-site Nucleophile is the Cys148. L-glutamine contacts are provided by residues Gln152 and 202-203 (SL). Residues His243 and Glu245 contribute to the active site.

In terms of assembly, heterotetramer consisting of two non-identical subunits: a beta subunit and a large alpha subunit. Expressed in roots and leaves.

It localises to the plastid. The protein resides in the chloroplast. The enzyme catalyses chorismate + L-glutamine = anthranilate + pyruvate + L-glutamate + H(+). It functions in the pathway amino-acid biosynthesis; L-tryptophan biosynthesis; L-tryptophan from chorismate: step 1/5. Its function is as follows. Part of a heterotetrameric complex that catalyzes the two-step biosynthesis of anthranilate, an intermediate in the biosynthesis of L-tryptophan. In the first step, the glutamine-binding beta subunit of anthranilate synthase (AS) provides the glutamine amidotransferase activity which generates ammonia as a substrate that, along with chorismate, is used in the second step, catalyzed by the large alpha subunit of AS to produce anthranilate. This chain is Anthranilate synthase beta subunit 2, chloroplastic, found in Oryza sativa subsp. japonica (Rice).